The sequence spans 598 residues: Pantothenate kinase 1 (598 aa).

The interval Ala32 to Ala161 is disordered. The span at Gly38–Cys49 shows a compositional bias: gly residues. Ser215 carries the post-translational modification Phosphoserine. The Nucleolar localization signal signature appears at Lys218–Pro235. Glu363 acts as the Proton acceptor in catalysis. Positions 417, 420, and 432 each coordinate acetyl-CoA.

Belongs to the type II pantothenate kinase family. In terms of assembly, homodimer. Expressed at high levels in brain, heart, kidney, liver, skeletal muscle and testis. In terms of tissue distribution, detected at much lower levels in kidney, liver, brain and testis and not detected in heart or skeletal muscle.

The protein localises to the cytoplasm. It is found in the nucleus. It localises to the nucleolus. Its subcellular location is the cytosol. The protein resides in the cytoplasmic vesicle. The protein localises to the clathrin-coated vesicle. It is found in the recycling endosome. The catalysed reaction is (R)-pantothenate + ATP = (R)-4'-phosphopantothenate + ADP + H(+). It functions in the pathway cofactor biosynthesis; coenzyme A biosynthesis; CoA from (R)-pantothenate: step 1/5. Regulated by feedback inhibition by CoA and its thioesters. Functionally, catalyzes the phosphorylation of pantothenate to generate 4'-phosphopantothenate in the first and rate-determining step of coenzyme A (CoA) synthesis. The sequence is that of Pantothenate kinase 1 (PANK1) from Homo sapiens (Human).